We begin with the raw amino-acid sequence, 149 residues long: uncharacterized protein (149 aa).

This is an uncharacterized protein from Acanthamoeba polyphaga mimivirus (APMV).